We begin with the raw amino-acid sequence, 195 residues long: Killer cell lectin-like receptor subfamily G member 1 (195 aa).

Topologically, residues 1–38 are cytoplasmic; that stretch reads MTDSVIYSMLELPTATQAQNDYGPQQKSSSSRPSCSCL. The ITIM motif motif lies at 5-10; sequence VIYSML. The chain crosses the membrane as a helical; Signal-anchor for type II membrane protein span at residues 39 to 59; it reads VAIALGLLTAVLLSVLLYQWI. The Extracellular portion of the chain corresponds to 60–195; the sequence is LCQGSNYSTC…KCPFADQALF (136 aa). N65 carries an N-linked (GlcNAc...) asparagine glycan. A disulfide bridge connects residues C75 and C86. Positions 82–185 constitute a C-type lectin domain; it reads YGNHCYYFSV…CEVPLHWVCK (104 aa). N-linked (GlcNAc...) asparagine glycosylation is found at N97, N137, and N150. Intrachain disulfides connect C103–C184 and C163–C176.

As to quaternary structure, forms a monomer and homodimer; disulfide-linked. Interacts (via ITIM motif) with PTPN11 and INPP5D. As to expression, expressed specifically on natural killer (NK) cells and T-cells, mainly CD8 T-cells.

The protein resides in the cell membrane. Its function is as follows. Plays an inhibitory role on natural killer (NK) cells and T-cell functions upon binding to their non-MHC ligands. May mediate missing self recognition by binding to a highly conserved site on classical cadherins, enabling it to monitor expression of E-cadherin/CDH1, N-cadherin/CDH2 and R-cadherin/CDH4 on target cells. This is Killer cell lectin-like receptor subfamily G member 1 (KLRG1) from Homo sapiens (Human).